Consider the following 427-residue polypeptide: Serine--tRNA ligase (427 aa).

Residue 236-238 (TAE) participates in L-serine binding. 267-269 (RSE) provides a ligand contact to ATP. Glu290 is an L-serine binding site. Residue 354-357 (EISS) participates in ATP binding. Residue Ser388 coordinates L-serine.

This sequence belongs to the class-II aminoacyl-tRNA synthetase family. Type-1 seryl-tRNA synthetase subfamily. Homodimer. The tRNA molecule binds across the dimer.

Its subcellular location is the cytoplasm. It catalyses the reaction tRNA(Ser) + L-serine + ATP = L-seryl-tRNA(Ser) + AMP + diphosphate + H(+). It carries out the reaction tRNA(Sec) + L-serine + ATP = L-seryl-tRNA(Sec) + AMP + diphosphate + H(+). The protein operates within aminoacyl-tRNA biosynthesis; selenocysteinyl-tRNA(Sec) biosynthesis; L-seryl-tRNA(Sec) from L-serine and tRNA(Sec): step 1/1. Catalyzes the attachment of serine to tRNA(Ser). Is also able to aminoacylate tRNA(Sec) with serine, to form the misacylated tRNA L-seryl-tRNA(Sec), which will be further converted into selenocysteinyl-tRNA(Sec). This Psychrobacter arcticus (strain DSM 17307 / VKM B-2377 / 273-4) protein is Serine--tRNA ligase.